Reading from the N-terminus, the 144-residue chain is D-aminoacyl-tRNA deacylase (144 aa).

Positions 136–137 match the Gly-cisPro motif, important for rejection of L-amino acids motif; the sequence is GP.

Belongs to the DTD family. Homodimer.

Its subcellular location is the cytoplasm. The enzyme catalyses glycyl-tRNA(Ala) + H2O = tRNA(Ala) + glycine + H(+). It carries out the reaction a D-aminoacyl-tRNA + H2O = a tRNA + a D-alpha-amino acid + H(+). Functionally, an aminoacyl-tRNA editing enzyme that deacylates mischarged D-aminoacyl-tRNAs. Also deacylates mischarged glycyl-tRNA(Ala), protecting cells against glycine mischarging by AlaRS. Acts via tRNA-based rather than protein-based catalysis; rejects L-amino acids rather than detecting D-amino acids in the active site. By recycling D-aminoacyl-tRNA to D-amino acids and free tRNA molecules, this enzyme counteracts the toxicity associated with the formation of D-aminoacyl-tRNA entities in vivo and helps enforce protein L-homochirality. The chain is D-aminoacyl-tRNA deacylase from Aliivibrio fischeri (strain MJ11) (Vibrio fischeri).